Consider the following 1481-residue polypeptide: Coiled-coil domain-containing protein 88B (1481 aa).

Coiled-coil stretches lie at residues 200–225 (ELVA…RERD) and 258–491 (SHHL…GSQH). 3 disordered regions span residues 430 to 458 (ELQR…QDEV), 494 to 731 (LEEQ…AIPE), and 1331 to 1481 (PRRE…SLSQ). S441 bears the Phosphoserine mark. Polar residues-rich tracts occupy residues 542–557 (ASYS…SQAP) and 568–590 (QMVS…TVET). S649 bears the Phosphoserine mark. Residues 660-695 (TLREPLKDQKALDRELELSKQQKETGRHEQRPKGLE) are compositionally biased toward basic and acidic residues. A coiled-coil region spans residues 731 to 1308 (EEQALRDEVA…KIMDQYRVLE (578 aa)). Residues S1353 and S1384 each carry the phosphoserine modification. A compositionally biased stretch (polar residues) spans 1371–1386 (TGSSSPAPMRRVQSSL). Residues 1453-1472 (LSEHEADDTREAFQEQKPEK) are compositionally biased toward basic and acidic residues.

It belongs to the CCDC88 family. Homodimer. Interacts with DOCK8. Interacts (via C-terminus) with intact microtubules. Interacts with dynein-dynactin motor complex. Interacts (via C-terminus) with HSPA5. Abundantly expressed in immune cells, including both CD4(+) and CD8(+) T-cells and in myeloid cells (at protein level). Expressed in endothelium (at protein level). Expressed specifically in spleen, bone marrow, lymph nodes and thymus. Expressed in liver and heart.

The protein localises to the membrane. Its subcellular location is the cytoplasm. It localises to the cytoskeleton. The protein resides in the microtubule organizing center. It is found in the endoplasmic reticulum. The protein localises to the golgi apparatus. Functionally, acts as a positive regulator of T-cell maturation and inflammatory function. Required for several functions of T-cells in both the CD4(+) and the CD8(+) compartments and this includes expression of cell surface markers of activation, proliferation, and cytokine production in response to specific or non-specific stimulation and during the course of infection with the mouse malaria parasite Plasmodium berghei. Enhances NK cell cytotoxicity by positively regulating polarization of microtubule-organizing center (MTOC) to cytotoxic synapse, lytic granule transport along microtubules, and dynein-mediated clustering to MTOC. Interacts with HSPA5 and stabilizes the interaction between HSPA5 and ERN1, leading to suppression of ERN1-induced JNK activation and endoplasmic reticulum stress-induced apoptosis. The sequence is that of Coiled-coil domain-containing protein 88B (Ccdc88b) from Mus musculus (Mouse).